The sequence spans 61 residues: Large ribosomal subunit protein bL32 (61 aa).

Over residues 1–16 (MAVPKRKTSPSKRGMR) the composition is skewed to basic residues. Residues 1–40 (MAVPKRKTSPSKRGMRRSADALKAPTYIEDKNSGELRRPH) are disordered. Positions 28 to 40 (IEDKNSGELRRPH) are enriched in basic and acidic residues.

It belongs to the bacterial ribosomal protein bL32 family.

The protein is Large ribosomal subunit protein bL32 of Sinorhizobium medicae (strain WSM419) (Ensifer medicae).